A 312-amino-acid chain; its full sequence is Glutaminase (312 aa).

Ser-67, Asn-118, Glu-162, Asn-169, Tyr-193, Tyr-245, and Val-263 together coordinate substrate.

It belongs to the glutaminase family. In terms of assembly, homotetramer.

The catalysed reaction is L-glutamine + H2O = L-glutamate + NH4(+). The protein is Glutaminase of Bordetella avium (strain 197N).